We begin with the raw amino-acid sequence, 58 residues long: Cecropin-A (58 aa).

The N-terminal stretch at 1-23 (MNFSKIFIFVVLAVLLLCSQTEA) is a signal peptide. Position 57 is a leucine amide (L57).

This sequence belongs to the cecropin family. Relatively abundant in head, thorax and to a lesser extent in abdominal carcass and anterior midgut.

It is found in the secreted. Antibacterial activity against several Gram-positive and Gram-negative bacteria. Antifungal activity against A.fumigatus, B.cinerea, F.culmorum, F.oxysporum, N.crassa, C.albicans, C.neoformans and S.cerevisiae. This Anopheles gambiae (African malaria mosquito) protein is Cecropin-A (CecA).